A 427-amino-acid chain; its full sequence is Glutamate-1-semialdehyde 2,1-aminomutase (427 aa).

Lys-265 carries the post-translational modification N6-(pyridoxal phosphate)lysine.

It belongs to the class-III pyridoxal-phosphate-dependent aminotransferase family. HemL subfamily. Homodimer. The cofactor is pyridoxal 5'-phosphate.

The protein resides in the cytoplasm. The catalysed reaction is (S)-4-amino-5-oxopentanoate = 5-aminolevulinate. Its pathway is porphyrin-containing compound metabolism; protoporphyrin-IX biosynthesis; 5-aminolevulinate from L-glutamyl-tRNA(Glu): step 2/2. This Burkholderia cenocepacia (strain ATCC BAA-245 / DSM 16553 / LMG 16656 / NCTC 13227 / J2315 / CF5610) (Burkholderia cepacia (strain J2315)) protein is Glutamate-1-semialdehyde 2,1-aminomutase.